The following is a 948-amino-acid chain: MASISDDGMALSGYLKKLKTMKKKFFVLYEETSNSSARLEYYDTEKKFLQRAEPKRVIYLKNCFNINRRLDTKQRFVIVLSSRDGGFGIVLESENDLRKWLDKLLVLQRNIANTNGTAYSPYDQVWQVVIQKKGISEKVGITGTYHCCLTSKSLTFVCIGPDKTPNGEERVASIEILLTTIRRCGHASPQCIFYVELGRQSVLGSGDLWMETDNAAVATNMHNTILSAMSAKTESNTNLINVYQNRPDLSHEPMRKRSSSANEASKPINVNVIQNSQNSLDLRSCSSPHNYGFGRERCDSLPTRNGTLSESSNQTYFGSNHGLRSNTISGIRPHSSNKHSNSPTFTMPLRCSASEESSISIEESDDNGSFSHYRLNTRSSETAIPEENIDDFASAEFSKVSEQNESDENYIPMTPINPTDAIHEKEKVDMQRLEDGSLHFDFPEHASEKLARDFDLDSDNQCGRPIRAYSIGNKVEHLKFNKRLGHLNDTGQNPNRVRAYSVGSKSKIPRCDLQRVVLVEDNKHEFAANRSQSSITKEGTSYSTSSNRQKKSTSAPLLSLKNHINSDRMSDLMEIDFSQATNLEKQKFIKNNEIPKYIENVFPKTPRTDSSSLTLHATSQKDIFNGTKLNNTVNASEEGYLEMKPVGNAYTPSSNCLPIKVEKLKISDYTAPLTTAAPVHDLNKISAYNISAEKWKEQSLCEEKKSNSPLNETPCSLKPTDVESNSHDEHSTNNMECEVSVQCDKQNNLDDKVAENNNLDIGGHEEKKLVHSISSEDYTQIKDKSNDFTKFNEAGYKILQIKSDSSLISLKLYQKGIHKDNLERSHRLTESVNTIPDNATASSSVTKFNINTKAADSRSTDPSTPQNILQIKDLNFPSRSSSRISQPELHYASLDLPHCSGQNPAKYLKRGSRESPPVSACPGDGNTYAKIDFDQSDSSSSSSNIFNT.

Positions 8 to 109 (GMALSGYLKK…WLDKLLVLQR (102 aa)) constitute a PH domain. Residues 122 to 236 (YDQVWQVVIQ…SAMSAKTESN (115 aa)) enclose the IRS-type PTB domain. The tract at residues 247 to 270 (PDLSHEPMRKRSSSANEASKPINV) is disordered. Phosphoserine is present on residues Ser286 and Ser287. Polar residues predominate over residues 304-329 (RNGTLSESSNQTYFGSNHGLRSNTIS). The interval 304–373 (RNGTLSESSN…SDDNGSFSHY (70 aa)) is disordered. Ser342 carries the post-translational modification Phosphoserine. Tyr410 is subject to Phosphotyrosine; by INSR. A YXXM motif 1 motif is present at residues 410-413 (YIPM). The interval 528 to 559 (ANRSQSSITKEGTSYSTSSNRQKKSTSAPLLS) is disordered. The span at 529–556 (NRSQSSITKEGTSYSTSSNRQKKSTSAP) shows a compositional bias: polar residues. Position 554 is a phosphoserine (Ser554). The YXXM motif 2 motif lies at 640–643 (YLEM). Residues 703-734 (EKKSNSPLNETPCSLKPTDVESNSHDEHSTNN) are disordered. The segment covering 720–731 (TDVESNSHDEHS) has biased composition (basic and acidic residues). Residue Tyr891 is modified to Phosphotyrosine; by INSR. Residues 907 to 948 (YLKRGSRESPPVSACPGDGNTYAKIDFDQSDSSSSSSNIFNT) are disordered. Ser912 and Ser915 each carry phosphoserine. Residue Tyr928 is modified to Phosphotyrosine; by INSR. The segment covering 936-948 (SDSSSSSSNIFNT) has biased composition (low complexity).

As to quaternary structure, bindings to phosphatidylinositol 3-kinase and SHP2.

In terms of biological role, activates phosphatidylinositol 3-kinase when bound to the regulatory p85 subunit. May mediate the control of various cellular processes by insulin-like peptides. When phosphorylated by the insulin receptor binds specifically to various cellular proteins containing SH2 domains. Involved in control of cell proliferation, cell size, and body and organ growth throughout development. Also has a role in a signaling pathway controlling the physiological response required to endure periods of low nutrient conditions. Insulin/insulin-like growth factor (IGF) signaling pathway has a role in regulating aging and is necessary in the ovary for vitellogenic maturation. This Drosophila erecta (Fruit fly) protein is Insulin receptor substrate 1.